The primary structure comprises 189 residues: Peptidyl-tRNA hydrolase (189 aa).

Tyr-14 is a binding site for tRNA. His-19 serves as the catalytic Proton acceptor. TRNA contacts are provided by Phe-64, Asn-66, and Asn-112.

It belongs to the PTH family. As to quaternary structure, monomer.

The protein resides in the cytoplasm. The catalysed reaction is an N-acyl-L-alpha-aminoacyl-tRNA + H2O = an N-acyl-L-amino acid + a tRNA + H(+). Functionally, hydrolyzes ribosome-free peptidyl-tRNAs (with 1 or more amino acids incorporated), which drop off the ribosome during protein synthesis, or as a result of ribosome stalling. Catalyzes the release of premature peptidyl moieties from peptidyl-tRNA molecules trapped in stalled 50S ribosomal subunits, and thus maintains levels of free tRNAs and 50S ribosomes. This chain is Peptidyl-tRNA hydrolase, found in Sphingopyxis alaskensis (strain DSM 13593 / LMG 18877 / RB2256) (Sphingomonas alaskensis).